The sequence spans 228 residues: Phosphoribosylformylglycinamidine synthase subunit PurQ (228 aa).

Residues 3-226 enclose the Glutamine amidotransferase type-1 domain; it reads FAVIVFPGSN…VKYWRETHVV (224 aa). The Nucleophile role is filled by cysteine 86. Catalysis depends on residues histidine 195 and glutamate 197.

In terms of assembly, part of the FGAM synthase complex composed of 1 PurL, 1 PurQ and 2 PurS subunits.

It is found in the cytoplasm. It catalyses the reaction N(2)-formyl-N(1)-(5-phospho-beta-D-ribosyl)glycinamide + L-glutamine + ATP + H2O = 2-formamido-N(1)-(5-O-phospho-beta-D-ribosyl)acetamidine + L-glutamate + ADP + phosphate + H(+). It carries out the reaction L-glutamine + H2O = L-glutamate + NH4(+). The protein operates within purine metabolism; IMP biosynthesis via de novo pathway; 5-amino-1-(5-phospho-D-ribosyl)imidazole from N(2)-formyl-N(1)-(5-phospho-D-ribosyl)glycinamide: step 1/2. In terms of biological role, part of the phosphoribosylformylglycinamidine synthase complex involved in the purines biosynthetic pathway. Catalyzes the ATP-dependent conversion of formylglycinamide ribonucleotide (FGAR) and glutamine to yield formylglycinamidine ribonucleotide (FGAM) and glutamate. The FGAM synthase complex is composed of three subunits. PurQ produces an ammonia molecule by converting glutamine to glutamate. PurL transfers the ammonia molecule to FGAR to form FGAM in an ATP-dependent manner. PurS interacts with PurQ and PurL and is thought to assist in the transfer of the ammonia molecule from PurQ to PurL. The sequence is that of Phosphoribosylformylglycinamidine synthase subunit PurQ from Geobacillus sp. (strain WCH70).